Here is a 442-residue protein sequence, read N- to C-terminus: C4-dicarboxylate transport protein (442 aa).

Transmembrane regions (helical) follow at residues 10–30 (VQVL…PSLG), 40–60 (FIKL…VSGI), 77–97 (LLYF…IVNI), 144–164 (FTQG…FALL), 183–203 (VIFV…FGAM), 221–241 (LMIT…GLIA), 331–351 (LLGV…SGFI), and 354–374 (AATL…ILGI). Positions 418 to 442 (LPTIEPDVHSEERGEGRELDSLRPA) are disordered. The segment covering 423–442 (PDVHSEERGEGRELDSLRPA) has biased composition (basic and acidic residues).

Belongs to the dicarboxylate/amino acid:cation symporter (DAACS) (TC 2.A.23) family.

The protein resides in the cell membrane. In terms of biological role, responsible for the transport of dicarboxylates such as succinate, fumarate, and malate across the membrane. In Deinococcus deserti (strain DSM 17065 / CIP 109153 / LMG 22923 / VCD115), this protein is C4-dicarboxylate transport protein.